The sequence spans 730 residues: Catalase-peroxidase (730 aa).

Residues 1-25 form a disordered region; the sequence is MEEKKCPVTGHTQHTPTGGGTKNKD. The segment at residues 95–218 is a cross-link (tryptophyl-tyrosyl-methioninium (Trp-Tyr) (with M-244)); sequence WHSAGTYRLN…LAAVQMGLIY (124 aa). Catalysis depends on His-96, which acts as the Proton acceptor. A cross-link (tryptophyl-tyrosyl-methioninium (Tyr-Met) (with W-95)) is located at residues 218 to 244; the sequence is YVNPEGPNGQPSVLASGRDVRDTFKRM. Residue His-259 coordinates heme b.

It belongs to the peroxidase family. Peroxidase/catalase subfamily. As to quaternary structure, homodimer or homotetramer. The cofactor is heme b. In terms of processing, formation of the three residue Trp-Tyr-Met cross-link is important for the catalase, but not the peroxidase activity of the enzyme.

It catalyses the reaction H2O2 + AH2 = A + 2 H2O. The catalysed reaction is 2 H2O2 = O2 + 2 H2O. In terms of biological role, bifunctional enzyme with both catalase and broad-spectrum peroxidase activity. The chain is Catalase-peroxidase from Desulfitobacterium hafniense (strain Y51).